A 392-amino-acid polypeptide reads, in one-letter code: Cell division protein DivIB (392 aa).

Residues 1–87 (MSEKDNNLTP…ETQSSEAPIE (87 aa)) are disordered. Residues 1–131 (MSEKDNNLTP…KGSAPLLKKM (131 aa)) lie on the Cytoplasmic side of the membrane. Basic and acidic residues predominate over residues 14-32 (KHLEYQKRKAEEAKKEKKA). Acidic residues predominate over residues 58-76 (TRDEAESAELLEEGFETNN). The helical transmembrane segment at 132–152 (WPALAIVVLVFVGSLYLISPL) threads the bilayer. The POTRA domain maps to 153-224 (SKISTFSVSG…NRFEAIVKEH (72 aa)). The Extracellular portion of the chain corresponds to 153-392 (SKISTFSVSG…TAQSTTTSSN (240 aa)). A disordered region spans residues 368-392 (ISAQNAKKTDASSENTAQSTTTSSN).

This sequence belongs to the FtsQ/DivIB family. DivIB subfamily.

Its subcellular location is the cell membrane. Cell division protein that may be involved in stabilizing or promoting the assembly of the division complex. The sequence is that of Cell division protein DivIB from Lactococcus lactis subsp. lactis (strain IL1403) (Streptococcus lactis).